We begin with the raw amino-acid sequence, 115 residues long: MSERPPEKTLAELASPNHECRACGYVYIPSQGDQKTSVSPGTPFEALPLNWKCPVCGAPRNYFISTGETDAPSGFAENLNYGFGFNRMSGGKKNLLIFGSLFVIFLFFLSLYGMG.

In terms of domain architecture, Rubredoxin-like spans 15-66 (SPNHECRACGYVYIPSQGDQKTSVSPGTPFEALPLNWKCPVCGAPRNYFIST). Fe cation-binding residues include Cys20, Cys23, Cys53, and Cys56.

The protein belongs to the rubredoxin family. Requires Fe(3+) as cofactor.

In terms of biological role, rubredoxin is a small nonheme, iron protein lacking acid-labile sulfide. Its single Fe, chelated to 4 Cys, functions as an electron acceptor and may also stabilize the conformation of the molecule. Could be involved in hydrogenase-linked redox processes. The chain is Rubredoxin (rub) from Synechocystis sp. (strain ATCC 27184 / PCC 6803 / Kazusa).